The following is a 388-amino-acid chain: tRNA(Ile)-lysidine synthase (388 aa).

51–56 (SGGRDS) lines the ATP pocket.

It belongs to the tRNA(Ile)-lysidine synthase family.

It is found in the cytoplasm. The catalysed reaction is cytidine(34) in tRNA(Ile2) + L-lysine + ATP = lysidine(34) in tRNA(Ile2) + AMP + diphosphate + H(+). Functionally, ligates lysine onto the cytidine present at position 34 of the AUA codon-specific tRNA(Ile) that contains the anticodon CAU, in an ATP-dependent manner. Cytidine is converted to lysidine, thus changing the amino acid specificity of the tRNA from methionine to isoleucine. The polypeptide is tRNA(Ile)-lysidine synthase (Bifidobacterium longum subsp. infantis (strain ATCC 15697 / DSM 20088 / JCM 1222 / NCTC 11817 / S12)).